We begin with the raw amino-acid sequence, 1939 residues long: Myosin-1 (1939 aa).

A Myosin N-terminal SH3-like domain is found at 33–82; the sequence is DAKTSVFVAEPKESFVKGTVQSREGGKVTVKTEAGATLTVKEDQVFPMNP. T64 and T69 each carry phosphothreonine. In terms of domain architecture, Myosin motor spans 86–782; it reads DKIEDMAMMT…LLGLLEEMRD (697 aa). The residue at position 130 (K130) is an N6,N6,N6-trimethyllysine. 179–186 lines the ATP pocket; sequence GESGAGKT. The residue at position 389 (Y389) is a Phosphotyrosine. A Phosphoserine modification is found at S392. T419 bears the Phosphothreonine mark. Y424 is modified (phosphotyrosine). A Phosphoserine modification is found at S625. Residues 659 to 681 are actin-binding; the sequence is LNKLMTNLRSTHPHFVRCIIPNE. A Pros-methylhistidine modification is found at H757. The interval 761–775 is actin-binding; the sequence is KFGHTKVFFKAGLLG. In terms of domain architecture, IQ spans 785–814; that stretch reads LAQLITRTQARCRGFLARVEYQKMVERRES. Residues 843–1939 adopt a coiled-coil conformation; sequence LLKSAETEKE…EVHTKIISEE (1097 aa). A phosphoserine mark is found at S1092 and S1096. Disordered stretches follow at residues 1125 to 1147 and 1153 to 1172; these read EIEA…SREL and RLEE…KKRE. Residues 1128 to 1147 show a composition bias toward basic and acidic residues; the sequence is AERASRAKAEKQRSDLSREL. Phosphoserine is present on residues S1162 and S1237. At T1241 the chain carries Phosphothreonine. S1243 is subject to Phosphoserine. T1255 carries the phosphothreonine modification. A Phosphoserine modification is found at S1261. Phosphothreonine is present on residues T1265 and T1286. Phosphoserine is present on residues S1288, S1292, S1303, and S1306. At Y1464 the chain carries Phosphotyrosine. At T1467 the chain carries Phosphothreonine. Residue S1474 is modified to Phosphoserine. Position 1492 is a phosphotyrosine (Y1492). S1495 carries the phosphoserine modification. Residue T1501 is modified to Phosphothreonine. A Phosphoserine modification is found at S1514. Residue T1517 is modified to Phosphothreonine. A phosphoserine mark is found at S1554, S1574, S1600, S1603, S1714, and S1726. Residues T1730 and T1736 each carry the phosphothreonine modification. At S1739 the chain carries Phosphoserine.

It belongs to the TRAFAC class myosin-kinesin ATPase superfamily. Myosin family. Muscle myosin is a hexameric protein that consists of 2 heavy chain subunits (MHC), 2 alkali light chain subunits (MLC) and 2 regulatory light chain subunits (MLC-2). Interacts with SLC26A5.

It localises to the cytoplasm. The protein localises to the myofibril. Its function is as follows. Required for normal hearing. It plays a role in cochlear amplification of auditory stimuli, likely through the positive regulation of prestin (SLC26A5) activity and outer hair cell (OHC) electromotility. The sequence is that of Myosin-1 (MYH1) from Canis lupus familiaris (Dog).